A 364-amino-acid polypeptide reads, in one-letter code: Chorismate synthase (364 aa).

Residues Arg48 and Arg54 each coordinate NADP(+). Residues Arg125–Ser127, Asn238–Ala239, Gly278, Lys293–Ser297, and Arg319 each bind FMN.

Belongs to the chorismate synthase family. As to quaternary structure, homotetramer. Requires FMNH2 as cofactor.

It catalyses the reaction 5-O-(1-carboxyvinyl)-3-phosphoshikimate = chorismate + phosphate. It participates in metabolic intermediate biosynthesis; chorismate biosynthesis; chorismate from D-erythrose 4-phosphate and phosphoenolpyruvate: step 7/7. Catalyzes the anti-1,4-elimination of the C-3 phosphate and the C-6 proR hydrogen from 5-enolpyruvylshikimate-3-phosphate (EPSP) to yield chorismate, which is the branch point compound that serves as the starting substrate for the three terminal pathways of aromatic amino acid biosynthesis. This reaction introduces a second double bond into the aromatic ring system. The chain is Chorismate synthase from Marinobacter nauticus (strain ATCC 700491 / DSM 11845 / VT8) (Marinobacter aquaeolei).